The following is a 502-amino-acid chain: UDP-N-acetylglucosamine diphosphorylase 2 (502 aa).

The Substrate binding motif lies at 130 to 133; sequence LSGG. N250 is a substrate binding site. A Substrate binding motif is present at residues 332-333; that stretch reads EY. Residue K429 coordinates substrate.

This sequence belongs to the UDPGP type 1 family. As to quaternary structure, monomer. Requires Mg(2+) as cofactor. Mn(2+) is required as a cofactor. As to expression, expressed in root tips, stipules, lateral root primordia, immature anthers and at the branching points of the flowering shoots.

The protein localises to the cytoplasm. The catalysed reaction is N-acetyl-alpha-D-glucosamine 1-phosphate + UTP + H(+) = UDP-N-acetyl-alpha-D-glucosamine + diphosphate. It carries out the reaction N-acetyl-alpha-D-galactosamine 1-phosphate + UTP + H(+) = UDP-N-acetyl-alpha-D-galactosamine + diphosphate. The enzyme catalyses alpha-D-glucose 1-phosphate + UTP + H(+) = UDP-alpha-D-glucose + diphosphate. Its pathway is nucleotide-sugar biosynthesis; UDP-N-acetyl-alpha-D-glucosamine biosynthesis; UDP-N-acetyl-alpha-D-glucosamine from N-acetyl-alpha-D-glucosamine 1-phosphate: step 1/1. In terms of biological role, uridylyltransferase involved in the biosynthesis of UDP-glucosamine, an essential precursor for glycoprotein and glycolipid synthesis. Can use UDP-glucosamine, the 4-epimer UDP-galactosamine and UDP-glucose as substrates. Acts redundantly with GLCNAC1PUT1. Required for gametogenesis and embryo development. The chain is UDP-N-acetylglucosamine diphosphorylase 2 (GLCNAC1PUT2) from Arabidopsis thaliana (Mouse-ear cress).